Reading from the N-terminus, the 270-residue chain is Endonuclease 4 (270 aa).

His-69, His-108, Glu-139, Asp-169, His-172, His-204, Asp-217, His-219, and Glu-248 together coordinate Zn(2+).

It belongs to the AP endonuclease 2 family. Zn(2+) serves as cofactor.

The catalysed reaction is Endonucleolytic cleavage to 5'-phosphooligonucleotide end-products.. Functionally, endonuclease IV plays a role in DNA repair. It cleaves phosphodiester bonds at apurinic or apyrimidinic (AP) sites, generating a 3'-hydroxyl group and a 5'-terminal sugar phosphate. In addition, possesses a 3'-5' exonuclease activity. This chain is Endonuclease 4, found in Thermus thermophilus (strain ATCC BAA-163 / DSM 7039 / HB27).